Reading from the N-terminus, the 714-residue chain is Fimbrin-3 (714 aa).

The 49-residue stretch at 7–55 (VIVSDPWLQSQLTQVELRSLNSKFVALKNQSGKVTLEDLPSVLVKVKSL) folds into the EF-hand domain. Calponin-homology (CH) domains lie at 124–241 (QSEK…KIQL), 269–372 (LPPE…HERN), 393–499 (CRDE…RTHM), and 514–622 (DMTD…YWSL). 2 actin-binding regions span residues 124 to 372 (QSEK…HERN) and 393 to 622 (CRDE…YWSL). Residues 628 to 662 (SSESSSSSSDSSSTHSTTTTCTSTCTSTDASPAPS) are compositionally biased toward low complexity. The disordered stretch occupies residues 628–694 (SSESSSSSSD…NEVSSLTIEE (67 aa)). Over residues 670–680 (SSLNGEVSSLT) the composition is skewed to polar residues. The span at 681–694 (IEEDNEVSSLTIEE) shows a compositional bias: acidic residues.

As to quaternary structure, interacts with F-actin.

It is found in the cytoplasm. Its subcellular location is the cytoskeleton. Functionally, cross-links actin filaments (F-actin). Stabilizes and prevents F-actin depolymerization mediated by profilin. May regulate actin cytoarchitecture, cell cycle, cell division, cell elongation and cytoplasmic tractus. This chain is Fimbrin-3, found in Arabidopsis thaliana (Mouse-ear cress).